The primary structure comprises 280 residues: Ribosomal RNA-processing protein 7 homolog A (280 aa).

Residues 59-159 enclose the RRM domain; that stretch reads RTLFVLNVPP…TGIHKWISDY (101 aa). Position 99 is a phosphoserine (serine 99).

Belongs to the RRP7 family. As to quaternary structure, part of the small subunit (SSU) processome, composed of more than 70 proteins and the RNA chaperone small nucleolar RNA (snoRNA) U3. Interacts with NOL6; required for NOL6 localization to nucleolus.

It localises to the nucleus. Its subcellular location is the nucleolus. The protein localises to the cell projection. The protein resides in the cilium. It is found in the cytoplasm. It localises to the cytoskeleton. Its subcellular location is the microtubule organizing center. The protein localises to the centrosome. Functionally, nucleolar protein that is involved in ribosomal RNA (rRNA) processing. Also plays a role in primary cilia resorption, and cell cycle progression in neurogenesis and neocortex development. Part of the small subunit (SSU) processome, first precursor of the small eukaryotic ribosomal subunit. During the assembly of the SSU processome in the nucleolus, many ribosome biogenesis factors, an RNA chaperone and ribosomal proteins associate with the nascent pre-rRNA and work in concert to generate RNA folding, modifications, rearrangements and cleavage as well as targeted degradation of pre-ribosomal RNA by the RNA exosome. This chain is Ribosomal RNA-processing protein 7 homolog A (RRP7A), found in Pongo abelii (Sumatran orangutan).